The following is a 317-amino-acid chain: NAD kinase (317 aa).

D82 (proton acceptor) is an active-site residue. NAD(+) contacts are provided by residues 82–83, R87, 157–158, D187, and 198–203; these read DG, NE, and TAYAFS.

This sequence belongs to the NAD kinase family. A divalent metal cation is required as a cofactor.

The protein localises to the cytoplasm. It carries out the reaction NAD(+) + ATP = ADP + NADP(+) + H(+). In terms of biological role, involved in the regulation of the intracellular balance of NAD and NADP, and is a key enzyme in the biosynthesis of NADP. Catalyzes specifically the phosphorylation on 2'-hydroxyl of the adenosine moiety of NAD to yield NADP. The polypeptide is NAD kinase (Corynebacterium diphtheriae (strain ATCC 700971 / NCTC 13129 / Biotype gravis)).